We begin with the raw amino-acid sequence, 144 residues long: Glutaredoxin-C6 (144 aa).

Residues 39-143 form the Glutaredoxin domain; the sequence is EAKIRRLISE…PKLVQVGALW (105 aa). A disulfide bond links Cys59 and Cys62.

It belongs to the glutaredoxin family. CC-type subfamily.

The protein resides in the cytoplasm. Has a glutathione-disulfide oxidoreductase activity in the presence of NADPH and glutathione reductase. Reduces low molecular weight disulfides and proteins. The polypeptide is Glutaredoxin-C6 (GRXC6) (Arabidopsis thaliana (Mouse-ear cress)).